Consider the following 530-residue polypeptide: Histone-arginine methyltransferase CARMER (530 aa).

The 310-residue stretch at 141 to 450 folds into the SAM-dependent MTase PRMT-type domain; the sequence is ASQYFQFYGY…QSYDVTIDLH (310 aa). Residues Gln154, Arg163, Gly187, Glu209, Glu238, and Thr266 each coordinate S-adenosyl-L-methionine. Arg501 bears the Asymmetric dimethylarginine; by autocatalysis mark.

Belongs to the class I-like SAM-binding methyltransferase superfamily. Protein arginine N-methyltransferase family. As to quaternary structure, homodimer. The dimethylated protein is the major form.

The protein resides in the cytoplasm. It is found in the nucleus. It carries out the reaction L-arginyl-[protein] + 2 S-adenosyl-L-methionine = N(omega),N(omega)-dimethyl-L-arginyl-[protein] + 2 S-adenosyl-L-homocysteine + 2 H(+). Methylates (mono- and asymmetric dimethylation) the guanidino nitrogens of arginyl residues in proteins. May methylate histone H3 at 'Arg-17' and activate transcription via chromatin remodeling. The polypeptide is Histone-arginine methyltransferase CARMER (Art4) (Drosophila sechellia (Fruit fly)).